Consider the following 399-residue polypeptide: Trimethyllysine dioxygenase (399 aa).

Residues H214, D216, and H360 each coordinate Fe cation.

Belongs to the gamma-BBH/TMLD family. Fe(2+) is required as a cofactor. It depends on L-ascorbate as a cofactor.

The protein localises to the cytoplasm. The catalysed reaction is N(6),N(6),N(6)-trimethyl-L-lysine + 2-oxoglutarate + O2 = (3S)-3-hydroxy-N(6),N(6),N(6)-trimethyl-L-lysine + succinate + CO2. Its pathway is amine and polyamine biosynthesis; carnitine biosynthesis. In terms of biological role, converts trimethyllysine (TML) into hydroxytrimethyllysine (HTML). The sequence is that of Trimethyllysine dioxygenase from Meyerozyma guilliermondii (strain ATCC 6260 / CBS 566 / DSM 6381 / JCM 1539 / NBRC 10279 / NRRL Y-324) (Yeast).